The sequence spans 215 residues: Ribonuclease HII (215 aa).

The RNase H type-2 domain maps to 19 to 214 (KNVIGVDEAG…KILETEEEKT (196 aa)). A divalent metal cation contacts are provided by aspartate 25, glutamate 26, and aspartate 121.

This sequence belongs to the RNase HII family. The cofactor is Mn(2+). Mg(2+) is required as a cofactor.

The protein localises to the cytoplasm. The enzyme catalyses Endonucleolytic cleavage to 5'-phosphomonoester.. Functionally, endonuclease that specifically degrades the RNA of RNA-DNA hybrids. The polypeptide is Ribonuclease HII (Fusobacterium nucleatum subsp. nucleatum (strain ATCC 25586 / DSM 15643 / BCRC 10681 / CIP 101130 / JCM 8532 / KCTC 2640 / LMG 13131 / VPI 4355)).